A 277-amino-acid polypeptide reads, in one-letter code: 2-dehydro-3-deoxyphosphooctonate aldolase (277 aa).

The protein belongs to the KdsA family.

Its subcellular location is the cytoplasm. It catalyses the reaction D-arabinose 5-phosphate + phosphoenolpyruvate + H2O = 3-deoxy-alpha-D-manno-2-octulosonate-8-phosphate + phosphate. Its pathway is carbohydrate biosynthesis; 3-deoxy-D-manno-octulosonate biosynthesis; 3-deoxy-D-manno-octulosonate from D-ribulose 5-phosphate: step 2/3. The protein operates within bacterial outer membrane biogenesis; lipopolysaccharide biosynthesis. This is 2-dehydro-3-deoxyphosphooctonate aldolase from Alkalilimnicola ehrlichii (strain ATCC BAA-1101 / DSM 17681 / MLHE-1).